The chain runs to 1170 residues: Thrombospondin-1 (1170 aa).

Residues 1–18 (MELLRGLGVLFLLHMCGS) form the signal peptide. Residues 47–95 (RLVKGQDLSSPAFRIENANLIPAVPDDKFQDLLDAVWADKGFIFLASLR) form a heparin-binding region. The Laminin G-like domain maps to 56-270 (SPAFRIENAN…HKTKDLQAIC (215 aa)). Residues Cys171 and Cys232 are joined by a disulfide bond. 2 N-linked (GlcNAc...) asparagine glycosylation sites follow: Asn248 and Asn360. Positions 316–373 (PLCFHNGVQYKNNEEWTVDSCTECHCQNSVTICKKVSCPIMPCSNATVPDGECCPRCW) constitute a VWFC domain. 3 consecutive TSP type-1 domains span residues 379-429 (DDGW…QECD), 435-490 (DGGW…DACP), and 492-547 (NGGW…QDCP). Residue Trp385 is glycosylated (C-linked (Man) tryptophan). 3 cysteine pairs are disulfide-bonded: Cys391–Cys423, Cys395–Cys428, and Cys406–Cys413. Residues Trp438 and Trp441 are each glycosylated (C-linked (Man) tryptophan). Cystine bridges form between Cys447-Cys484, Cys451-Cys489, and Cys462-Cys474. O-linked (Fuc...) threonine glycosylation occurs at Thr450. Trp498 is a glycosylation site (C-linked (Man) tryptophan). 21 cysteine pairs are disulfide-bonded: Cys504–Cys541, Cys508–Cys546, Cys519–Cys531, Cys551–Cys562, Cys556–Cys572, Cys575–Cys586, Cys592–Cys608, Cys599–Cys617, Cys620–Cys644, Cys650–Cys663, Cys657–Cys676, Cys678–Cys689, Cys705–Cys713, Cys718–Cys738, Cys754–Cys774, Cys777–Cys797, Cys813–Cys833, Cys836–Cys856, Cys874–Cys894, Cys910–Cys930, and Cys946–Cys1167. Thr507 carries an O-linked (Fuc...) threonine glycan. The interval 531–1152 (CVGDVTENQV…YAGGRLGLFV (622 aa)) is involved in retention in extracellular matrix (ECM); involved in trimer formation. Residues 547 to 587 (PIDGCLSNPCFAGAKCTSYPDGSWKCGACPPGYSGNGIQCK) form the EGF-like 1 domain. Ser553 carries an O-linked (Xyl) serine glycan. The EGF-like 2 domain occupies 646-690 (PRNPCTDGTHDCNKNAKCNYLGHYSDPMYRCECKPGYAGNGIICG). TSP type-3 repeat units lie at residues 691–726 (EDTD…NSGQ), 727–762 (EDYD…NPAQ), 763–785 (YDYD…NPDQ), 786–821 (ADTD…NVDQ), 822–844 (RDTD…NPDQ), 845–882 (LDSD…NANQ), 883–918 (ADHD…NPDQ), and 919–954 (KDSD…DISE). Asn708 is a glycosylation site (N-linked (GlcNAc...) asparagine). The segment at 840–934 (HNPDQLDSDS…GRGDACKDDF (95 aa)) is disordered. 2 stretches are compositionally biased toward basic and acidic residues: residues 883 to 894 (ADHDKDGKGDAC) and 917 to 934 (DQKD…KDDF). Positions 926–928 (RGD) match the Cell attachment site motif. One can recognise a TSP C-terminal domain in the interval 958–1170 (RRFQMIPLDP…SDMKYECRDS (213 aa)). Asn1067 is a glycosylation site (N-linked (GlcNAc...) asparagine).

The protein belongs to the thrombospondin family. As to quaternary structure, homotrimer; disulfide-linked. Can bind to fibrinogen, fibronectin, laminin, type V collagen and integrins alpha-V/beta-1, alpha-V/beta-3 and alpha-IIb/beta-3. Binds heparin. Interacts (via the C-terminal domain) with CD47. Interacts (via the TSP type I repeats) with CD36; the interaction conveys an antiangiogenic effect. Interacts (via the TSP type I repeats) with HRG; the interaction blocks the antiangiogenic effect of THBS1 with CD36. Interacts with ATF6 (via lumenal domain). Interacts with FN1; this interaction is enhanced by TNFAIP6, which may act as a bridging molecule between FN1 and THBS1. Interacts with SIRPA; the interaction stimulates phosphorylation of SIRPA.

It is found in the secreted. It localises to the cell surface. Its subcellular location is the extracellular space. The protein localises to the extracellular matrix. The protein resides in the endoplasmic reticulum. It is found in the sarcoplasmic reticulum. Adhesive glycoprotein that mediates cell-to-cell and cell-to-matrix interactions. Multifunctional, involved in inflammation, angiogenesis, wound healing, reactive oxygen species (ROS) signaling, nitrous oxide (NO) signaling, apoptosis, senescence, aging, cellular self-renewal, stemness, and cardiovascular and metabolic homeostasis. Negatively modulates dendritic cell activation and cytokine release, as part of an autocrine feedback loop, contributing to the resolution of inflammation and immune homeostasis. Ligand for receptor CD47. Modulates nitrous oxide (NO) signaling via CD47, hence playing a role as a pressor agent, supporting blood pressure. Plays a role in endothelial cell senescence, acting via CD47, by increasing the abundance and activation of NADPH oxidase NOX1, and so generating excess ROS. Inhibits stem cell self-renewal, acting via CD47 signaling, probably by regulation of the stem cell transcription factors POU5F1/OCT4, SOX2, MYC/c-Myc and KLF4. Negatively modulates wound healing, acting via CD47. Ligand for receptor CD36. Involved in inducing apoptosis in podocytes in response to elevated free fatty acids, acting via CD36. Plays a role in suppressing angiogenesis, acting, depending on context, via CD36 or CD47. Promotes cellular senescence in a TP53-CDKN1A-RB1 signaling-dependent manner. Ligand for immunoglobulin-like cell surface receptor SIRPA. Involved in ROS signaling in non-phagocytic cells, stimulating NADPH oxidase-derived ROS production, acting via interaction with SIRPA. Plays a role in metabolic dysfunction in diet-induced obesity, perhaps acting by exacerbating adipose inflammatory activity; its effects may be mediated, at least in part, through enhanced adipocyte proliferation. Plays a role in ER stress response, via its interaction with the activating transcription factor 6 alpha (ATF6) which produces adaptive ER stress response factors. May be involved in age-related conditions, including metabolic dysregulation, during normal aging. The sequence is that of Thrombospondin-1 (Thbs1) from Mus musculus (Mouse).